A 12345-amino-acid chain; its full sequence is Muscle-specific protein 300 kDa (12345 aa).

Disordered regions lie at residues 1–68 (MADS…STVT) and 121–152 (WSDGSSPVKRPAEQSSDELRLTDDQDEYDAEN). The Cytoplasmic segment spans residues 1 to 12295 (MADSGGPGSK…GARFLGRVAR (12295 aa)). Positions 19–28 (AGGGGAGAAG) are enriched in gly residues. Residues 45-60 (EQKSSREQVLEEEKSQ) are compositionally biased toward basic and acidic residues. One copy of the LRR 1 repeat lies at 249 to 273 (FKELENFLEGERTVREVPSADGVRT). 3 disordered regions span residues 295–325 (EGYVSPRDSPSWSRSSYSSERSSVTPPRSVD), 387–488 (TVQV…RKLI), and 504–526 (GKSNASDNDIDIDNDSDTEGRPA). A compositionally biased stretch (low complexity) spans 299–321 (SPRDSPSWSRSSYSSERSSVTPP). 2 stretches are compositionally biased toward polar residues: residues 387–404 (TVQVGGGNRTSPQDSTPQ) and 414–434 (TTKTMLTSTPIGTKEQPQTGP). The span at 462–484 (TITSTTTKSTSSSTSATSSSSTS) shows a compositional bias: low complexity. Acidic residues predominate over residues 511–520 (NDIDIDNDSD). Calponin-homology (CH) domains follow at residues 630–737 (RVQK…LYFQ) and 777–882 (QGAR…HKYP). The LRR 2 repeat unit spans residues 823–847 (LVNLAELKKTSNRQRLETAFDVAES). The stretch at 919–952 (SSFPRDFGEYLLARSEVDAHLAAYNRLKQLIESQ) is one TPR 1 repeat. 3 LRR repeats span residues 1089 to 1112 (CCLIAFLNLVENKMRGWTGKYGHE), 1389 to 1411 (HLFHQLQIQQESLEAGQKEIHQW), and 1616 to 1642 (LKDVEKELQLEQQALNRNEDVDSILQR). The TPR 2 repeat unit spans residues 1603–1636 (LEFRLDENAFYQSLKDVEKELQLEQQALNRNEDV). One copy of the HAT 1 repeat lies at 1903-1935 (TGWNQAYTETSDKLQALKGTQAVWSEFVDQKND). LRR repeat units follow at residues 2087 to 2109 (KQLDLLAADASELAPKEGNIAEA) and 2558 to 2581 (QQQIQQMTVRKDKFHALEHNFGQA). Residues 2109-2233 (AKRLKGEITK…SRWTAVHENA (125 aa)) form the Calponin-homology (CH) 3 domain. The stretch at 2663–2696 (ADRIQKYNLISQALREYADSKDKFSKELKKAEDL) is one TPR 3 repeat. The interval 2699–2724 (AIPQQPRDETELHQASEKTRKTMEQL) is disordered. Basic and acidic residues predominate over residues 2704–2724 (PRDETELHQASEKTRKTMEQL). 3 LRR repeats span residues 2728–2751 (KLSLDELERRGNNVGKLFSAIGEP), 2935–2959 (CRALRGELDNSGNEIDNIKQKVDEL), and 3030–3053 (SSDKYNLDVKKSSLQEVSKSIDDC). Residues 2894–2962 (EQELRRRSKE…KQKVDELRNL (69 aa)) are a coiled coil. One copy of the Spectrin 1 repeat lies at 3110-3207 (LWSQYEQSNE…AVSKALTSYI (98 aa)). A TPR 4 repeat occupies 3346 to 3379 (KAKVPTTDELYPTLATKKAALQNYKTQLQEITLH). 4 LRR repeats span residues 3370–3393 (KTQLQEITLHKNALKQLHDKAVTL), 3437–3462 (LEKAQDWLNTIKSEAIDILNETTFEK), 3530–3556 (LVKLKQLCSKWDEFDTIIEELDNWMKN), and 3611–3634 (NLKLSRLNTRYQTLKNLCKESIAK). The Spectrin 2 repeat unit spans residues 3539–3633 (KWDEFDTIIE…LKNLCKESIA (95 aa)). The TPR 5 repeat unit spans residues 3629 to 3662 (KESIAKYVNYVKDHESFDKDFDSFKQNLQSSVDE). The HAT 2 repeat unit spans residues 3706–3739 (KLYGHTSPEGREIIRQQLRALRTLWDNYTDDLNS). The stretch at 3748–3771 (LLQFNEFSIAQDQLTKWLKDVDKA) is one LRR 15 repeat. The Spectrin 3 repeat unit spans residues 4177 to 4273 (SYQDILNQTV…YDQVGQDCAK (97 aa)). The TPR 6 repeat unit spans residues 4360-4393 (EVMARDLANLHADFEKFGASLSDVKSGLENRLQQ). Residues 4371 to 4403 (ADFEKFGASLSDVKSGLENRLQQWNDYEINLDR) form an HAT 3 repeat. One copy of the Spectrin 4 repeat lies at 4611–4701 (FDEIADSLKS…GKLQKRAQNY (91 aa)). 2 LRR repeats span residues 4654 to 4676 (NDINNHQVELGNLQEIAANLPEK) and 4742 to 4763 (EQISLHTNLDRLKNLKASLADE). The stretch at 4799-4830 (EWESLLTTISSTIEAIEARLQHWSEYEQLRDQ) is one HAT 4 repeat. The stretch at 4820–4919 (HWSEYEQLRD…VKELNNRWQQ (100 aa)) is one Spectrin 5 repeat. An LRR 18 repeat occupies 4839–4863 (DNNLHAIDLKEDLPKKRAQLDALKA). Residues 4894–4926 (ASGPELVTKYQQIFHKVKELNNRWQQYVTSHED) form an HAT 5 repeat. LRR repeat units lie at residues 5266–5289 (QIDILVKNHKLNLCPNLPEKEKQV) and 5333–5357 (SSVYQVQVNLAKDVLKKVETNRDQH). Residues 5645 to 5678 (SAEPEDCEIIEQEVALLQEEFDAYREALNKAKDY) form a TPR 7 repeat. LRR repeat units follow at residues 5761–5784 (SNAIMQLTTKYNALLTLAKEVMRR), 5820–5843 (PGTLNEVQIKLNTVKNLRQGFETG), and 5979–6002 (TKFDDLQTQVNKIIESLENQVNSH). A Spectrin 6 repeat occupies 5791–5895 (EHQQHHSLYE…DLNDVRQKLA (105 aa)). The stretch at 6088-6120 (SEWETLQTISRDARSSLESCLAAWQTFLQKFNK) is one HAT 6 repeat. Spectrin repeat units follow at residues 6321–6405 (RWND…DKLK) and 6424–6530 (AYHQ…RLLE). 2 coiled-coil regions span residues 6356–6397 (MKTL…VNRL) and 6454–6484 (REQTQEQIKQHEALLVEIQKYQTNLDDLNAK). Residues 6363 to 6387 (YKTLSNELKLKGNELEQLQSEARDL) form an LRR 24 repeat. Residues 6522 to 6555 (VQIKNRLLESLAKFQEYEDTLDSIMRNLETYEPI) form a TPR 8 repeat. LRR repeat units lie at residues 6531 to 6554 (SLAKFQEYEDTLDSIMRNLETYEP) and 6560 to 6587 (LDAPATSLELAQNQLRCAQEMQNKLNNE). Residues 6567 to 6597 (LELAQNQLRCAQEMQNKLNNEKSRLAAAVQA) adopt a coiled-coil conformation. Residues 6631-6657 (EDLLDQKPPPKTRSSTGGVSTDDDKDE) form a disordered region. The stretch at 6660–6695 (VEIQVELSDVNEALLDPIAHERVKNYRRIVRLNSAH) is one TPR 9 repeat. Residues 7004–7026 (SALRNLNTENRNLSGVLKAELDR) form an LRR 27 repeat. The stretch at 7161-7195 (EMETATEGELRTTSLPVLEEQLAHYKKLLSDAENK) is one TPR 10 repeat. LRR repeat units follow at residues 7219–7242 (LKLNDDIKNMKDRYGRIKNTIDDR), 7300–7318 (KELKDSKSKMGDMQMDDLP), 7319–7339 (ELQSILAQQDDMIKLIEDQLA), and 7340–7361 (HLRQLLLLREQFIALINEIIAF). Positions 7419–7457 (KNSITEQLQSLKNQLQNLRKAVESQRQKHQLQLESHKKM) form a coiled coil. An LRR 32 repeat occupies 7524 to 7547 (SSLLEMLSEGRSLVASLPHELEER). Residues 7644 to 7676 (TKLTNTLANAKTQQSELEKEAERWREYQQSIDR) form an HAT 7 repeat. Residues 7654–7687 (KTQQSELEKEAERWREYQQSIDRVKATIERTKFV) form a TPR 11 repeat. 3 LRR repeats span residues 7692–7714 (QNLAGLHFNIQKLSHAIGNVQSQ), 7752–7777 (QDLVRSLEQRRDNLQQLAEHWDGFEN), and 7816–7840 (LREESNQLKSSHKEIEALSKSILTF). The TPR 12 repeat unit spans residues 7759-7792 (EQRRDNLQQLAEHWDGFENSLHAWEKALGRLEDK). A coiled-coil region spans residues 7799 to 7935 (TVRSRRHLED…NSQVQQAAEE (137 aa)). The stretch at 7878–7911 (SKDLEEIEQVFRRISQLQDKLNALHEQLQSVHVY) is one TPR 13 repeat. LRR repeat units follow at residues 8178–8201 (KISVEAVLLERNSLLQEACEEWDQ), 8238–8264 (EKTLADINVQKTKLRLSIEKLEVHFRN), 8298–8321 (EQTLAQIDVYQQQMQSLRQRIIQE), and 8354–8377 (DELLQSLSSVEDGIANMNQSSLDG). Residues 8431–8464 (QQGITMIANAMHGQKKRQQEIDEYQQHLLELEQW) form a TPR 14 repeat. An LRR 40 repeat occupies 8534 to 8557 (EQLQSIITILREQVTVATKRIFTI). Disordered regions lie at residues 8583 to 8616 (IKPPTEAPASPEAHESIESNENTIDSSSMPEEEI), 8966 to 9023 (QKPT…LPAP), 9131 to 9158 (EFEPQSPHEESTKSDLVKPQETEPQVVA), 9361 to 9459 (GKES…PDSD), 9502 to 9735 (LVED…TSIS), and 9769 to 9797 (TMQLPKQEKKSKKDKKKKQKNVPEVEQQL). Polar residues predominate over residues 8601–8611 (SNENTIDSSSM). Residues 8982 to 9011 (TQVTTTTRTTTATTQEQEQPEQQTQPTTTE) are compositionally biased toward low complexity. Residues 9136 to 9151 (SPHEESTKSDLVKPQE) are compositionally biased toward basic and acidic residues. Over residues 9394–9404 (KRRRKKKKRRD) the composition is skewed to basic residues. The span at 9410–9419 (ELEQEQETEP) shows a compositional bias: acidic residues. Over residues 9420–9439 (EPVAAVKEPEVSSDVPVSPE) the composition is skewed to low complexity. Basic and acidic residues predominate over residues 9440–9451 (DSPRDTVRHESI). Composition is skewed to polar residues over residues 9544–9563 (AVQTSLEVQPDNQENESQTL), 9587–9597 (ISTTEIQTDVS), and 9605–9625 (EISSQTTVTTTIEKELQTTPK). Residues 9658 to 9680 (TSEQSTVTETTTTTETHVQTTTP) show a composition bias toward low complexity. Over residues 9681-9698 (EPREQTEVIKPETAHEET) the composition is skewed to basic and acidic residues. An LRR 41 repeat occupies 9699–9721 (STVELVQFADGEMQTTPPGDQQP). Residues 9711 to 9735 (MQTTPPGDQQPASLDDSSLTATSIS) are compositionally biased toward polar residues. Residues 9777–9788 (KKSKKDKKKKQK) are compositionally biased toward basic residues. LRR repeat units lie at residues 9995–10019 (SNVLHLATLSEQIKELPTEQRILEV), 10073–10096 (EEKLDNYNQLNDELSTIKQNVVQL), 10252–10276 (KEFTKITVLADKLVESPIVSSSLEQ), and 10353–10376 (RDELQWLQVAQQRVPDLSAVTSAD). Coiled-coil stretches lie at residues 10072-10099 (SEEKLDNYNQLNDELSTIKQNVVQLERQ) and 10172-10257 (LSAK…FTKI). The stretch at 10231-10264 (QAERERVLQLQSLAEEYEQTLKEFTKITVLADKL) is one TPR 15 repeat. The HAT 8 repeat unit spans residues 10426 to 10458 (IVLLKLREEVALYLHRLLVFKEIWVQYEQQTDK). LRR repeat units follow at residues 10512 to 10535 (EKSLQVIPLADEMLQRQFHAQLED), 10570 to 10593 (ERELQEIYLTMTSMKGVIKNEEEL), and 10644 to 10667 (AEELEGASVLRDQLQAIQEGISNQ). The TPR 16 repeat unit spans residues 10854–10888 (VVAWNDTSENLQQLRTRYQRAVELWDKYRNASAAV). The HAT 9 repeat unit spans residues 10855 to 10887 (VAWNDTSENLQQLRTRYQRAVELWDKYRNASAA). 2 LRR repeats span residues 10907–10929 (DALQHAKVCQDNLTTQNDRILEL) and 11021–11043 (AHLQTLARTEEQLRQLKERHQNS). A coiled-coil region spans residues 11016 to 11046 (LAALRAHLQTLARTEEQLRQLKERHQNSEVA). One copy of the HAT 10 repeat lies at 11070–11104 (DTFQEYHRLSTRLARSQNSSEALRLWRQYLQHVQS). Residues 11072 to 11105 (FQEYHRLSTRLARSQNSSEALRLWRQYLQHVQSF) form a TPR 17 repeat. The stretch at 11197–11222 (EAERNALQLRYIHLKRVPHLKHRLDA) is one LRR 51 repeat. Coiled-coil stretches lie at residues 11220 to 11247 (LDAMIQQLDQGEQQSKALQEQQQELARH) and 11281 to 11308 (LQRVTQLSESYEQRVNQLQQEFGAAQKL). 5 LRR repeats span residues 11342–11365 (SALESLTVTQEELKECISPHDMKT), 11398–11422 (LSNYQIRYDRISQWLQRLEQRVEKD), 11670–11692 (EELESQSVNLRQLEQIYAKLAMS), 11697–11720 (PENIQKLTLPTKVMVSMWRQLTPR), and 11744–11766 (EATNSLNAIQKALEQLPSAENQQ). The stretch at 11655–11685 (KHKLEERQMELRAKLEELESQSVNLRQLEQI) forms a coiled coil. Positions 11776–11806 (LQRLESLEKKLQDAQQHVQQADNLAQEAKTR) form a coiled coil. The stretch at 11804–11836 (KTRTKQQPQLKQLLELVSAYTTLWQTVQTRIVT) is one HAT 11 repeat. LRR repeat units follow at residues 11959–11981 (DTVAELTLRFDTLQSQWKARQQH) and 12198–12220 (SRLTDLRLRLQSLRRLSGIYIVK). The disordered stretch occupies residues 12253-12272 (SMQAAAPNTENANNTDGGDA). The segment covering 12256 to 12267 (AAAPNTENANNT) has biased composition (low complexity). Residues 12287-12345 (ARFLGRVARASLPIQALMLLLLGVATLVPHGEDYTCMFSNTFARSLEPMLSYPHGPPPT) form the KASH domain. A helical; Anchor for type IV membrane protein transmembrane segment spans residues 12296-12316 (ASLPIQALMLLLLGVATLVPH). Residues 12301 to 12323 (QALMLLLLGVATLVPHGEDYTCM) form an LRR 59 repeat. The Perinuclear space segment spans residues 12317–12345 (GEDYTCMFSNTFARSLEPMLSYPHGPPPT).

The protein belongs to the nesprin family. Core component of LINC complexes which are composed of inner nuclear membrane SUN domain-containing proteins coupled to outer nuclear membrane KASH domain-containing nesprins. Interacts with klar; this interaction allows the anchoring of the Msp300 nuclear ring structure to the nuclear envelope. Interacts with sls; this interaction mediates the recruitment of Msp300 to the Z-disks.

The protein localises to the nucleus membrane. The protein resides in the cytoplasm. It is found in the myofibril. It localises to the sarcomere. Its subcellular location is the z line. The protein localises to the cytoskeleton. The protein resides in the microtubule organizing center. It is found in the perinuclear region. Functionally, component of the LINC (LInker of Nucleoskeleton and Cytoskeleton) complex involved in the connection between the nuclear lamina and the cytoskeleton. Collaborates with Klar to promote even spacing of the myonuclei at the periphery of striated muscle fibers by mediating a tight association between a nuclear ring structure of Msp300 and the plus ends of a unique astral MT network. In addition, is essential for anchoring nuclei, mitochondria and endoplasmic reticulum (ER) structures to the Z-disks. In fat body cells, part of perinuclear non-centrosomal microtubule-organizing centers (ncMTOCs) which function to accommodate the organization of microtubule (MT) networks to control nuclear positioning and dynein motor-based retrograde endosomal trafficking. Functions as the primary organizer of the ncMTOC by recruiting Patronin, shot and msps to the organizing centre. Within the ncMTOC, Msp300 and shot anchors the ncMTOC at the nuclear surface and recruits the MT minus-end regulators Patronin and Nin for assembly, anchoring and/or stabilization of circumferential and radial MTs at the ncMTOCs. Patronin, and perhaps Nin, recruits msps to the ncMTOC for the gamma-tubulin-independent elongation of radial MTs. This chain is Muscle-specific protein 300 kDa, found in Drosophila melanogaster (Fruit fly).